Reading from the N-terminus, the 449-residue chain is Glutamyl-tRNA reductase (449 aa).

Substrate-binding positions include T48–R51, S99, E104–Q106, and Q110. The Nucleophile role is filled by C49. G179 to G184 provides a ligand contact to NADP(+).

Belongs to the glutamyl-tRNA reductase family. As to quaternary structure, homodimer.

The catalysed reaction is (S)-4-amino-5-oxopentanoate + tRNA(Glu) + NADP(+) = L-glutamyl-tRNA(Glu) + NADPH + H(+). It functions in the pathway porphyrin-containing compound metabolism; protoporphyrin-IX biosynthesis; 5-aminolevulinate from L-glutamyl-tRNA(Glu): step 1/2. Functionally, catalyzes the NADPH-dependent reduction of glutamyl-tRNA(Glu) to glutamate 1-semialdehyde (GSA). This is Glutamyl-tRNA reductase from Methanosarcina barkeri (strain Fusaro / DSM 804).